The following is a 163-amino-acid chain: IQSTSMDQGILTEDSMNSFIRTLIQAGIWKNKVPKQTARTKDGMQTTVKKTEAEADAMASQDTRLGFQPIVSVDAELLRQQRRFSSPRVLLSENTPLEPPPLYLTEEPVVLNRTSRRKREGKSHRGEYSVCDSESRWVTDKSSAVDIRGHQVTVLGEIRMGPS.

The first 3 residues, 1–3, serve as a signal peptide directing secretion; the sequence is IQS. A propeptide spanning residues 4-119 is cleaved from the precursor; it reads TSMDQGILTE…VLNRTSRRKR (116 aa). N-linked (GlcNAc...) asparagine glycosylation occurs at asparagine 112.

Belongs to the NGF-beta family.

Its subcellular location is the secreted. Its function is as follows. Seems to promote the survival of visceral and proprioceptive sensory neurons. This chain is Neurotrophin-3 (NTF3), found in Chilabothrus striatus (Haitian boa constrictor).